The chain runs to 92 residues: LYR motif-containing protein 4 homolog (92 aa).

A coiled-coil region spans residues 48 to 68 (AEIDRQMAEGQQNLELIRRQV).

It belongs to the complex I LYR family. In terms of assembly, component of the mitochondrial core iron-sulfur cluster (ISC) assembly complex at least composed of the cysteine desulfurase Nfs1, the scaffold protein IscU, the accessory protein bcn92/Isd11/Lyrm4, and probably fh/frataxin. Interacts with Nfs1.

The protein resides in the mitochondrion. Functionally, stabilizing factor of the core iron-sulfur cluster (ISC) assembly complex that regulates the stability and cysteine desulfurase activity of Nfs1 and participates in the [2Fe-2S] clusters assembly on the scaffolding protein IscU. This is LYR motif-containing protein 4 homolog from Drosophila melanogaster (Fruit fly).